Consider the following 530-residue polypeptide: Putative ABC transporter ATP-binding protein SSO1893 (530 aa).

2 ABC transporter domains span residues 6-243 and 282-516; these read IRDL…LGLE and ILFA…EPPL. ATP contacts are provided by residues 38–45 and 314–321; these read GRSGSGKS and GKNGSGKT.

Belongs to the ABC transporter superfamily.

The protein localises to the cell membrane. Its function is as follows. Probably part of an ABC transporter complex. Responsible for energy coupling to the transport system. This Saccharolobus solfataricus (strain ATCC 35092 / DSM 1617 / JCM 11322 / P2) (Sulfolobus solfataricus) protein is Putative ABC transporter ATP-binding protein SSO1893.